The following is a 441-amino-acid chain: MREIISLHIGQAGVQIGNACWELYCKEHGILPNGQLDQNKMDDESAESFFSPTSVGTYVPRTLMVDLEPGVLDSIKTGKYRELYHPGQLISGKEDAANNYARGHYTVGKEIIEPAMEQIRRMADSCDGLQGFLIYHSFGGGTGSGFASLMMDRLAAEFGKKSKLEFSVYPAPKIATAVVEPYNSILTTHTTLDYSDCSFLVDNEAIYDMCRNLGIQRPYYTDINRVIAQVVSSITASLRFPGSLNVDLTEFQTNLVPYPRIHFPLVAYSPMLSKEKAAHEKLSVQEITNACFEPQNQMVRCDTRKGKYMACCLLFRGDVNPKEANNATANVKAKRTNQFVEWCPTGFKVGINSRKPTVLDGEAMAEVSRAVCALSNTTAISEAWKRLNNKFDLMFSKRAFVHWYVGEGMEEGEFSEAREDLAMLEDDYERISSNAEPVDEY.

8 residues coordinate GTP: Q11, E68, S137, G141, T142, T176, N203, and N224. Mg(2+) is bound at residue E68. E250 is an active-site residue.

Belongs to the tubulin family. As to quaternary structure, dimer of alpha and beta chains. A typical microtubule is a hollow water-filled tube with an outer diameter of 25 nm and an inner diameter of 15 nM. Alpha-beta heterodimers associate head-to-tail to form protofilaments running lengthwise along the microtubule wall with the beta-tubulin subunit facing the microtubule plus end conferring a structural polarity. Microtubules usually have 13 protofilaments but different protofilament numbers can be found in some organisms and specialized cells. Mg(2+) is required as a cofactor.

It localises to the cytoplasm. It is found in the cytoskeleton. The catalysed reaction is GTP + H2O = GDP + phosphate + H(+). Functionally, tubulin is the major constituent of microtubules, a cylinder consisting of laterally associated linear protofilaments composed of alpha- and beta-tubulin heterodimers. Microtubules grow by the addition of GTP-tubulin dimers to the microtubule end, where a stabilizing cap forms. Below the cap, tubulin dimers are in GDP-bound state, owing to GTPase activity of alpha-tubulin. This is Tubulin alpha chain (TUB1) from Encephalitozoon cuniculi (strain GB-M1) (Microsporidian parasite).